Consider the following 53-residue polypeptide: uncharacterized protein (53 aa).

An N-terminal signal peptide occupies residues Met1 to Thr23.

This is an uncharacterized protein from Acheta domesticus (House cricket).